The primary structure comprises 21 residues: Nigrocin-2GRb (21 aa).

In terms of tissue distribution, expressed by the skin glands.

It localises to the secreted. Antimicrobial peptide active against the Gram-positive bacterium S.aureus (MIC=12.5 uM) and against the Gram-negative bacteria E.coli (MIC=3 uM). Has antifungal activity against C.albicans (MIC=50 uM). Has some hemolytic activity against human erythrocytes (LC(50)=40 uM). The chain is Nigrocin-2GRb from Odorrana grahami (Yunnanfu frog).